The primary structure comprises 65 residues: Light-harvesting protein B-800-850 alpha chain C (65 aa).

At 1-11 the chain is on the cytoplasmic side; the sequence is MNQGRIWTVVS. The helical transmembrane segment at 12–35 threads the bilayer; the sequence is PTVGLPLLLGSVAAIAFAVHFAVL. Position 31 (histidine 31) interacts with a bacteriochlorophyll. Residues 36–65 are Periplasmic-facing; sequence ENTSWVAAFMNGKSVAAAPAPAAPAAPAKK.

Belongs to the antenna complex alpha subunit family. The core complex is formed by different alpha and beta chains, binding bacteriochlorophyll molecules, and arranged most probably in tetrameric structures disposed around the reaction center. The non-pigmented gamma chains may constitute additional components.

The protein localises to the cell inner membrane. Functionally, antenna complexes are light-harvesting systems, which transfer the excitation energy to the reaction centers. In Rhodopseudomonas palustris, this protein is Light-harvesting protein B-800-850 alpha chain C (pucAC).